Here is a 403-residue protein sequence, read N- to C-terminus: Phosphoglycerate kinase (403 aa).

Substrate-binding positions include 21-23 (DFN), arginine 36, 59-62 (HLGR), arginine 119, and arginine 159. ATP contacts are provided by residues lysine 214, glycine 301, glutamate 332, and 359–362 (GGDS).

Belongs to the phosphoglycerate kinase family. Monomer.

It is found in the cytoplasm. It catalyses the reaction (2R)-3-phosphoglycerate + ATP = (2R)-3-phospho-glyceroyl phosphate + ADP. The protein operates within carbohydrate degradation; glycolysis; pyruvate from D-glyceraldehyde 3-phosphate: step 2/5. The protein is Phosphoglycerate kinase of Lactobacillus delbrueckii subsp. bulgaricus (strain ATCC 11842 / DSM 20081 / BCRC 10696 / JCM 1002 / NBRC 13953 / NCIMB 11778 / NCTC 12712 / WDCM 00102 / Lb 14).